A 366-amino-acid polypeptide reads, in one-letter code: tRNA(Met) cytidine acetate ligase (366 aa).

ATP-binding positions include 7 to 20 (IAEF…HQYL), Gly-96, Asn-152, and Arg-175.

The protein belongs to the TmcAL family.

It localises to the cytoplasm. It catalyses the reaction cytidine(34) in elongator tRNA(Met) + acetate + ATP = N(4)-acetylcytidine(34) in elongator tRNA(Met) + AMP + diphosphate. Catalyzes the formation of N(4)-acetylcytidine (ac(4)C) at the wobble position of elongator tRNA(Met), using acetate and ATP as substrates. First activates an acetate ion to form acetyladenylate (Ac-AMP) and then transfers the acetyl group to tRNA to form ac(4)C34. In Streptococcus equi subsp. zooepidemicus (strain MGCS10565), this protein is tRNA(Met) cytidine acetate ligase.